The chain runs to 348 residues: MAQAPGIDKSKALEGALSQIERAFGKGSIMRMGERPTEQVDVISTGSLGLDIALGIGGLPRGRIIEIYGPESSGKTTMALHAIAEAQRKGGTCAFIDAEHALDPGYARKLGVDVDNLLISQPDAGEQALEIADTLVRSGAVDVLVVDSVAALVPRAELEGDMGDSHVGLHARLMSQALRKLTGSVSRSNTMLIFLNQIRLKIGVMFGSPESTTGGNALKFYASVRMDIRRIGSIKDKDEVTGNQTRVKVVKNKMAPPFRQVEFDIMYGEGISKVGELIDLGVKAGIVEKSGAWFSCDSQRIGQGRENAKQFLRDHPEMAADIERRVREQAGVVAEAMLVGPDEDGAEH.

69–76 is a binding site for ATP; sequence GPESSGKT.

It belongs to the RecA family.

It localises to the cytoplasm. In terms of biological role, can catalyze the hydrolysis of ATP in the presence of single-stranded DNA, the ATP-dependent uptake of single-stranded DNA by duplex DNA, and the ATP-dependent hybridization of homologous single-stranded DNAs. It interacts with LexA causing its activation and leading to its autocatalytic cleavage. The polypeptide is Protein RecA (Gluconacetobacter polyoxogenes (Acetobacter polyoxogenes)).